The chain runs to 462 residues: Glycerol-3-phosphate dehydrogenase [NAD(+)] GPDHC1, cytosolic (462 aa).

Residues 48–53 (GAGAWG), Lys-196, and Ala-235 each bind NAD(+). Lys-196 is a binding site for substrate. Lys-285 acts as the Proton acceptor in catalysis. Residues Arg-347 and Gln-375 each contribute to the NAD(+) site. Residue 347–348 (RN) coordinates substrate.

This sequence belongs to the NAD-dependent glycerol-3-phosphate dehydrogenase family. Expressed in roots, leaves, flowers and siliques.

It is found in the cytoplasm. Its subcellular location is the cytosol. It carries out the reaction sn-glycerol 3-phosphate + NAD(+) = dihydroxyacetone phosphate + NADH + H(+). Involved in cell redox homeostasis. Required for maintaining a steady state cellular NADH/NAD(+) ratio through a mitochondrial glycerol-3-phosphate redox shuttle. May function with the mitochondrial FAD-dependent glycerol-3-phosphate dehydrogenase SDP6 to shuttle reducing equivalents into the mitochondria for respiration. In Arabidopsis thaliana (Mouse-ear cress), this protein is Glycerol-3-phosphate dehydrogenase [NAD(+)] GPDHC1, cytosolic (GPDHC1).